Reading from the N-terminus, the 296-residue chain is 33 kDa chaperonin (296 aa).

2 cysteine pairs are disulfide-bonded: Cys-238–Cys-240 and Cys-271–Cys-274.

It belongs to the HSP33 family. Under oxidizing conditions two disulfide bonds are formed involving the reactive cysteines. Under reducing conditions zinc is bound to the reactive cysteines and the protein is inactive.

It is found in the cytoplasm. Redox regulated molecular chaperone. Protects both thermally unfolding and oxidatively damaged proteins from irreversible aggregation. Plays an important role in the bacterial defense system toward oxidative stress. This is 33 kDa chaperonin from Clostridium botulinum (strain Loch Maree / Type A3).